The following is a 1474-amino-acid chain: Adhesion G protein-coupled receptor L1 (1474 aa).

The first 24 residues, 1 to 24 (MARLAAVLWNLCVTAVLVTSATQG), serve as a signal peptide directing secretion. The Extracellular segment spans residues 25 to 858 (LSRAGLPFGL…EIYQGRINEL (834 aa)). Positions 40 to 129 (ACEGYPIELR…KYLEVQYDCV (90 aa)) constitute an SUEL-type lectin domain. Cystine bridges form between Cys41–Cys71, Cys50–Cys128, Cys83–Cys115, Cys96–Cys102, and Cys140–Cys322. An alpha-L-rhamnose-binding site is contributed by Glu42. N-linked (GlcNAc...) asparagine glycosylation is present at Asn98. Residue 117–120 (GTYK) participates in alpha-L-rhamnose binding. The Olfactomedin-like domain occupies 139-398 (VCPGTLQKVL…VVRYSLEFGP (260 aa)). Positions 400–434 (DPSAGPATSPPLSTTTTARPTPLTSTASPAATTPL) are disordered. Residues 405-434 (PATSPPLSTTTTARPTPLTSTASPAATTPL) show a composition bias toward low complexity. 2 cysteine pairs are disulfide-bonded: Cys480–Cys515 and Cys503–Cys532. N-linked (GlcNAc...) asparagine glycans are attached at residues Asn531, Asn640, Asn742, Asn801, Asn806, and Asn827. The GAIN-B domain maps to 669-851 (PARFLAAKEN…AVLMAHREIY (183 aa)). Intrachain disulfides connect Cys802–Cys833 and Cys821–Cys835. Residues 802-851 (CSFWNYSERSMLGYWSTQGCRLVESNKTHTTCACSHLTNFAVLMAHREIY) form a GPS region. A helical transmembrane segment spans residues 859 to 879 (LLSVITWVGIVISLVCLAICI). The Cytoplasmic portion of the chain corresponds to 880–893 (STFCFLRGLQTDRN). Residues 894-914 (TIHKNLCINLFLAELLFLVGI) traverse the membrane as a helical segment. The Extracellular portion of the chain corresponds to 915–920 (DKTQYE). The helical transmembrane segment at 921–941 (IACPIFAGLLHYFFLAAFSWL) threads the bilayer. Over 942-964 (CLEGVHLYLLLVEVFESEYSRTK) the chain is Cytoplasmic. The helical transmembrane segment at 965-985 (YYYLGGYCFPALVVGIAAAID) threads the bilayer. The Extracellular portion of the chain corresponds to 986–1002 (YRSYGTEKACWLRVDNY). A helical membrane pass occupies residues 1003 to 1023 (FIWSFIGPVSFVIVVNLVFLM). Topologically, residues 1024-1050 (VTLHKMIRSSSVLKPDSSRLDNIKSWA) are cytoplasmic. The helical transmembrane segment at 1051–1071 (LGAIALLFLLGLTWAFGLLFI) threads the bilayer. Over 1072-1075 (NKES) the chain is Extracellular. A helical transmembrane segment spans residues 1076–1096 (VVMAYLFTTFNAFQGVFIFVF). The Cytoplasmic segment spans residues 1097–1474 (HCALQKKVHK…DGQMQLVTSL (378 aa)). Omega-N-methylarginine is present on Arg1194. A Phosphoserine modification is found at Ser1220. Disordered regions lie at residues 1248–1273 (FNNS…RGRN), 1294–1328 (RGSS…PGGA), 1360–1429 (ESES…SRPP), and 1451–1474 (YLAA…VTSL). 2 stretches are compositionally biased toward pro residues: residues 1302–1314 (GPPP…PPVP) and 1408–1420 (ALPP…PGPP). Ser1473 carries the post-translational modification Phosphoserine.

It belongs to the G-protein coupled receptor 2 family. Adhesion G-protein coupled receptor (ADGR) subfamily. As to quaternary structure, forms a heterodimer, consisting of a large extracellular region (p120) non-covalently linked to a seven-transmembrane moiety (p85). Interacts with syntaxin and with proteins of the SHANK family via the PDZ domain. Interacts (via extracellular domain) with FLRT1, FLRT2 and FLRT3 (via extracellular domain). Post-translationally, autoproteolytically cleaved into 2 subunits, an extracellular subunit and a seven-transmembrane subunit. This proteolytic processing takes place early in the biosynthetic pathway, either in the endoplasmic reticulum or in the early compartment of the Golgi apparatus.

It localises to the cell membrane. The protein resides in the cell projection. Its subcellular location is the axon. It is found in the growth cone. The protein localises to the synapse. It localises to the presynaptic cell membrane. The protein resides in the synaptosome. Calcium-independent receptor of high affinity for alpha-latrotoxin, an excitatory neurotoxin present in black widow spider venom which triggers massive exocytosis from neurons and neuroendocrine cells. Receptor for TENM2 that mediates heterophilic synaptic cell-cell contact and postsynaptic specialization. Receptor probably implicated in the regulation of exocytosis. The chain is Adhesion G protein-coupled receptor L1 from Homo sapiens (Human).